Consider the following 370-residue polypeptide: 4-hydroxy-3-methylbut-2-en-1-yl diphosphate synthase (flavodoxin) (370 aa).

Cys268, Cys271, Cys303, and Glu310 together coordinate [4Fe-4S] cluster.

Belongs to the IspG family. [4Fe-4S] cluster serves as cofactor.

It catalyses the reaction (2E)-4-hydroxy-3-methylbut-2-enyl diphosphate + oxidized [flavodoxin] + H2O + 2 H(+) = 2-C-methyl-D-erythritol 2,4-cyclic diphosphate + reduced [flavodoxin]. It participates in isoprenoid biosynthesis; isopentenyl diphosphate biosynthesis via DXP pathway; isopentenyl diphosphate from 1-deoxy-D-xylulose 5-phosphate: step 5/6. Its function is as follows. Converts 2C-methyl-D-erythritol 2,4-cyclodiphosphate (ME-2,4cPP) into 1-hydroxy-2-methyl-2-(E)-butenyl 4-diphosphate. In Bacillus licheniformis (strain ATCC 14580 / DSM 13 / JCM 2505 / CCUG 7422 / NBRC 12200 / NCIMB 9375 / NCTC 10341 / NRRL NRS-1264 / Gibson 46), this protein is 4-hydroxy-3-methylbut-2-en-1-yl diphosphate synthase (flavodoxin).